Reading from the N-terminus, the 101-residue chain is TrfB transcriptional repressor protein (101 aa).

The segment at residues 37–56 is a DNA-binding region (H-T-H motif); that stretch reads QATFATSLGLTRGAVSQAVH.

In terms of biological role, in conjunction with KorB, inhibits the transcription of kilA, trfA and korAB operons. In conjunction with KorC is responsible for the negative control of kilC and kilE operons. This Escherichia coli protein is TrfB transcriptional repressor protein (trfB).